We begin with the raw amino-acid sequence, 273 residues long: MGSKEDAGKGCPAAGGVSSFTIQSILGGGPSEAPREPVGWPARKRSLSVSSEEEEPDDGWKAPACFCPDQHGPKEQGPKHHPPIPFPCLGTPKGSGGSGPGGLERTPFLSPSHSDFKEEKERLLPAGSPSPGSERPRDGGAERQAGAAKKKTRTVFSRSQVYQLESTFDMKRYLSSSERACLASSLQLTETQVKTWFQNRRNKWKRQLSAELEAANMAHASAQTLVSMPLVFRDSSLLRVPVPRSLAFPAPLYYPGSNLSALPLYNLYNKLDY.

The tract at residues 1–152 is disordered; that stretch reads MGSKEDAGKG…RQAGAAKKKT (152 aa). Over residues 93–102 the composition is skewed to gly residues; it reads KGSGGSGPGG. A compositionally biased stretch (basic and acidic residues) spans 114 to 123; the sequence is SDFKEEKERL. A DNA-binding region (homeobox) is located at residues 149–208; the sequence is KKKTRTVFSRSQVYQLESTFDMKRYLSSSERACLASSLQLTETQVKTWFQNRRNKWKRQL.

This sequence belongs to the HMX homeobox family.

The protein resides in the nucleus. Transcription factor involved in specification of neuronal cell types and which is required for inner ear and hypothalamus development. This Homo sapiens (Human) protein is Homeobox protein HMX2 (HMX2).